The following is a 338-amino-acid chain: UDP-3-O-acylglucosamine N-acyltransferase (338 aa).

His243 acts as the Proton acceptor in catalysis.

The protein belongs to the transferase hexapeptide repeat family. LpxD subfamily. Homotrimer.

The enzyme catalyses a UDP-3-O-[(3R)-3-hydroxyacyl]-alpha-D-glucosamine + a (3R)-hydroxyacyl-[ACP] = a UDP-2-N,3-O-bis[(3R)-3-hydroxyacyl]-alpha-D-glucosamine + holo-[ACP] + H(+). It participates in bacterial outer membrane biogenesis; LPS lipid A biosynthesis. In terms of biological role, catalyzes the N-acylation of UDP-3-O-acylglucosamine using 3-hydroxyacyl-ACP as the acyl donor. Is involved in the biosynthesis of lipid A, a phosphorylated glycolipid that anchors the lipopolysaccharide to the outer membrane of the cell. In Amoebophilus asiaticus (strain 5a2), this protein is UDP-3-O-acylglucosamine N-acyltransferase.